Consider the following 1324-residue polypeptide: Mediator of RNA polymerase II transcription subunit 13 (1324 aa).

6 disordered regions span residues 296 to 346 (ESGV…PPEA), 386 to 455 (FFDD…ATTA), 535 to 590 (GRFF…EPEI), 607 to 631 (HDDK…SNNS), 694 to 816 (KGGQ…VPSA), and 1151 to 1198 (TGSD…PDIY). Residues 298–331 (GVNTNESTAAQPQPAQNGTNSMAPAAGTTNATTQ) show a composition bias toward polar residues. The segment covering 398–407 (DGDNDNGNDN) has biased composition (acidic residues). Over residues 408–442 (DNDKADAMDVDVKEEAKKEEMIKKETKEEVPVKEE) the composition is skewed to basic and acidic residues. The segment covering 546–566 (DNEGSSDNTGDSSDSGDGSES) has biased composition (low complexity). Basic and acidic residues-rich tracts occupy residues 567-578 (VPRDVKRQKVDE) and 607-617 (HDDKPAKKIDS). Composition is skewed to low complexity over residues 618 to 631 (SNDT…SNNS) and 724 to 743 (SNAS…QMGA). Polar residues predominate over residues 750–784 (LSPSRGATPQPEGSSPETRPSNWTPGITSQVNSAA). Low complexity-rich tracts occupy residues 785-816 (SSPV…VPSA) and 1172-1184 (TGAA…GSAP).

It belongs to the Mediator complex subunit 13 family. As to quaternary structure, component of the SRB8-11 complex, which itself associates with the Mediator complex.

It is found in the nucleus. Component of the SRB8-11 complex. The SRB8-11 complex is a regulatory module of the Mediator complex which is itself involved in regulation of basal and activated RNA polymerase II-dependent transcription. The SRB8-11 complex may be involved in the transcriptional repression of a subset of genes regulated by Mediator. It may inhibit the association of the Mediator complex with RNA polymerase II to form the holoenzyme complex. The protein is Mediator of RNA polymerase II transcription subunit 13 (SSN2) of Yarrowia lipolytica (strain CLIB 122 / E 150) (Yeast).